The chain runs to 566 residues: Folate-like transporter DDB_G0272544 (566 aa).

Residues 24–81 (RNQDEDENENENNDNLENDNNKRNYISINNYEPYKEIDNNNNKNNNNNNIINNNNKIN) are a coiled coil. The segment at 25 to 46 (NQDEDENENENNDNLENDNNKR) is disordered. Residues 27–40 (DEDENENENNDNLE) are compositionally biased toward acidic residues. Transmembrane regions (helical) follow at residues 148-168 (VFLL…IIII), 171-191 (VAKI…WMIL), 194-214 (ITEG…YFSL), 226-246 (VNAG…LLVE), 252-272 (VYLL…ALGF), 304-324 (IWSG…QNLF), 332-352 (SWNG…AIIP), 364-384 (GIIL…MGFG), 388-408 (VVSA…SPIV), 420-440 (IGVL…LVQS), and 458-478 (YGAC…FLFL). Positions 517–544 (YNANIIDFENNNNNNNNNNNNNNNNNNN) form a coiled coil. A compositionally biased stretch (low complexity) spans 526–556 (NNNNNNNNNNNNNNNNNNNNNNNNNNNNNNN). Residues 526 to 566 (NNNNNNNNNNNNNNNNNNNNNNNNNNNNNNNVGIGGNDNFK) form a disordered region.

The protein belongs to the reduced folate carrier (RFC) transporter (TC 2.A.48) family.

The protein localises to the membrane. Its function is as follows. Folate transporter. In Dictyostelium discoideum (Social amoeba), this protein is Folate-like transporter DDB_G0272544.